We begin with the raw amino-acid sequence, 285 residues long: Integrin alpha-1 (285 aa).

Residues 1–285 (ENMTFGTTLV…HYSQDWVMLG (285 aa)) lie on the Extracellular side of the membrane. N-linked (GlcNAc...) asparagine glycosylation is found at Asn-2, Asn-40, Asn-208, and Asn-232. The VWFA domain maps to 66–279 (IVLDGSNSIY…QAGFSAHYSQ (214 aa)).

The protein belongs to the integrin alpha chain family. In terms of assembly, heterodimer of an alpha and a beta subunit. Alpha-1 associates with beta-1.

It localises to the membrane. Integrin alpha-1/beta-1 is a receptor for laminin and collagen. It recognizes the proline-hydroxylated sequence G-F-P-G-E-R in collagen. Involved in anchorage-dependent, negative regulation of EGF-stimulated cell growth. This Gallus gallus (Chicken) protein is Integrin alpha-1 (ITGA1).